Reading from the N-terminus, the 38-residue chain is Trypsin inhibitor DE5 beta chain (38 aa).

Belongs to the protease inhibitor I3 (leguminous Kunitz-type inhibitor) family. Heterodimer of an alpha and a beta chain linked by a disulfide bond.

In terms of biological role, inhibition of trypsin. This chain is Trypsin inhibitor DE5 beta chain, found in Adenanthera pavonina (Sandal bead tree).